Consider the following 153-residue polypeptide: Riboflavin synthase (153 aa).

It belongs to the DMRL synthase family. In terms of assembly, homooligomer. Mg(2+) is required as a cofactor.

It carries out the reaction 2 6,7-dimethyl-8-(1-D-ribityl)lumazine + H(+) = 5-amino-6-(D-ribitylamino)uracil + riboflavin. It functions in the pathway cofactor biosynthesis; riboflavin biosynthesis; riboflavin from 2-hydroxy-3-oxobutyl phosphate and 5-amino-6-(D-ribitylamino)uracil: step 2/2. With respect to regulation, inhibited by EDTA. The relatively low activity of this enzyme suggested that 6,7-dimethyl-8-ribityllumazine might not be its natural substrate. The chain is Riboflavin synthase (ribC) from Methanothermobacter marburgensis (strain ATCC BAA-927 / DSM 2133 / JCM 14651 / NBRC 100331 / OCM 82 / Marburg) (Methanobacterium thermoautotrophicum).